The primary structure comprises 529 residues: 56 kDa type-specific antigen (529 aa).

The first 22 residues, 1 to 22 (MKKIMLIASAMSALSLPFSASA), serve as a signal peptide directing secretion. Residues 67–87 (LTTSMPFGGTLAAGMTIAPGF) traverse the membrane as a helical segment. Basic and acidic residues predominate over residues 106–116 (GKTGSDADIRS). 2 disordered regions span residues 106 to 134 (GKTG…PQPT) and 392 to 424 (DGGC…KGKE). Residues 477 to 492 (TGMVASGALGVAINAA) form a helical membrane-spanning segment.

The protein localises to the cell membrane. In terms of biological role, may be an adherent factor for rickettsial adsorption to the host-cell surface and a determinant of virulence of individual rickettsial strain. It is the major outer membrane protein. This chain is 56 kDa type-specific antigen, found in Orientia tsutsugamushi (Rickettsia tsutsugamushi).